The sequence spans 250 residues: Triosephosphate isomerase (250 aa).

9 to 11 (NWK) contacts substrate. His-96 functions as the Electrophile in the catalytic mechanism. Glu-166 functions as the Proton acceptor in the catalytic mechanism. Substrate contacts are provided by residues Gly-172, Ser-212, and 233–234 (GG).

The protein belongs to the triosephosphate isomerase family. In terms of assembly, homodimer.

Its subcellular location is the cytoplasm. It carries out the reaction D-glyceraldehyde 3-phosphate = dihydroxyacetone phosphate. It participates in carbohydrate biosynthesis; gluconeogenesis. The protein operates within carbohydrate degradation; glycolysis; D-glyceraldehyde 3-phosphate from glycerone phosphate: step 1/1. Functionally, involved in the gluconeogenesis. Catalyzes stereospecifically the conversion of dihydroxyacetone phosphate (DHAP) to D-glyceraldehyde-3-phosphate (G3P). This chain is Triosephosphate isomerase, found in Chlorobium phaeobacteroides (strain BS1).